A 336-amino-acid polypeptide reads, in one-letter code: Large ribosomal subunit protein mL39 (336 aa).

In terms of domain architecture, TGS spans 60–126 (EKIEVKHVGK…TKSCEIKFLT (67 aa)). At lysine 123 the chain carries N6-acetyllysine.

This sequence belongs to the mitochondrion-specific ribosomal protein mL39 family. In terms of assembly, component of the mitochondrial ribosome large subunit (39S) which comprises a 16S rRNA and about 50 distinct proteins.

The protein resides in the mitochondrion. The sequence is that of Large ribosomal subunit protein mL39 (Mrpl39) from Mus musculus (Mouse).